Consider the following 170-residue polypeptide: ATP synthase subunit b (170 aa).

The helical transmembrane segment at 22–44 (IINLAVVVFGLYKFLPGFLGKIL) threads the bilayer.

It belongs to the ATPase B chain family. As to quaternary structure, F-type ATPases have 2 components, F(1) - the catalytic core - and F(0) - the membrane proton channel. F(1) has five subunits: alpha(3), beta(3), gamma(1), delta(1), epsilon(1). F(0) has four main subunits: a(1), b(1), b'(1) and c(10-14). The alpha and beta chains form an alternating ring which encloses part of the gamma chain. F(1) is attached to F(0) by a central stalk formed by the gamma and epsilon chains, while a peripheral stalk is formed by the delta, b and b' chains.

Its subcellular location is the cellular thylakoid membrane. Its function is as follows. F(1)F(0) ATP synthase produces ATP from ADP in the presence of a proton or sodium gradient. F-type ATPases consist of two structural domains, F(1) containing the extramembraneous catalytic core and F(0) containing the membrane proton channel, linked together by a central stalk and a peripheral stalk. During catalysis, ATP synthesis in the catalytic domain of F(1) is coupled via a rotary mechanism of the central stalk subunits to proton translocation. Component of the F(0) channel, it forms part of the peripheral stalk, linking F(1) to F(0). The sequence is that of ATP synthase subunit b from Prochlorococcus marinus (strain NATL1A).